We begin with the raw amino-acid sequence, 547 residues long: Chaperonin GroEL (547 aa).

Residues 30 to 33, Lys51, 87 to 91, Gly415, 479 to 481, and Asp495 contribute to the ATP site; these read TLGP, DGTTT, and NAA.

It belongs to the chaperonin (HSP60) family. Forms a cylinder of 14 subunits composed of two heptameric rings stacked back-to-back. Interacts with the co-chaperonin GroES.

Its subcellular location is the cytoplasm. The enzyme catalyses ATP + H2O + a folded polypeptide = ADP + phosphate + an unfolded polypeptide.. Together with its co-chaperonin GroES, plays an essential role in assisting protein folding. The GroEL-GroES system forms a nano-cage that allows encapsulation of the non-native substrate proteins and provides a physical environment optimized to promote and accelerate protein folding. In Polynucleobacter necessarius subsp. necessarius (strain STIR1), this protein is Chaperonin GroEL.